Reading from the N-terminus, the 263-residue chain is Small ribosomal subunit protein eS4, Y isoform 1 (263 aa).

The S4 RNA-binding domain occupies 42-104; it reads LPLIVFLRNR…TGEHFRLVYD (63 aa).

The protein belongs to the eukaryotic ribosomal protein eS4 family.

The polypeptide is Small ribosomal subunit protein eS4, Y isoform 1 (RPS4Y1) (Homo sapiens (Human)).